The following is a 633-amino-acid chain: Molybdenum cofactor biosynthesis protein 1 (633 aa).

Residues 1 to 380 (MAAQPVSRVV…QMKNRPMILI (380 aa)) form a molybdenum cofactor biosynthesis protein A region. A Phosphoserine modification is found at Ser61. Residues 61-295 (SFGRHHSYLR…AKAFKIPGFR (235 aa)) enclose the Radical SAM core domain. Residue Arg70 coordinates GTP. Positions 77 and 81 each coordinate [4Fe-4S] cluster. Tyr83 lines the S-adenosyl-L-methionine pocket. Cys84 serves as a coordination point for [4Fe-4S] cluster. GTP is bound at residue Arg120. Gly124 lines the S-adenosyl-L-methionine pocket. Thr151 provides a ligand contact to GTP. Ser175 provides a ligand contact to S-adenosyl-L-methionine. At Lys195 the chain carries N6-acetyllysine. A GTP-binding site is contributed by Lys212. Met246 contacts S-adenosyl-L-methionine. 2 residues coordinate [4Fe-4S] cluster: Cys309 and Cys312. 314–316 (RLR) lines the GTP pocket. Cys326 serves as a coordination point for [4Fe-4S] cluster. Residues 410–633 (VSFSSQMVTL…GGQRGDFHRT (224 aa)) are molybdenum cofactor biosynthesis protein C. The tract at residues 446–480 (SSHLDSDANPKCLSPTEPQAPAASSGPLPDSDQLT) is disordered. Lys525 carries the post-translational modification N6-acetyllysine. Asp603 serves as the catalytic For molybdenum cofactor biosynthesis protein C activity.

In the C-terminal section; belongs to the MoaC family. This sequence in the N-terminal section; belongs to the radical SAM superfamily. MoaA family. In terms of assembly, isoform MOCS1A and isoform MOCS1B probably form a heterooligomer. [4Fe-4S] cluster is required as a cofactor.

It carries out the reaction GTP + AH2 + S-adenosyl-L-methionine = (8S)-3',8-cyclo-7,8-dihydroguanosine 5'-triphosphate + 5'-deoxyadenosine + L-methionine + A + H(+). The enzyme catalyses (8S)-3',8-cyclo-7,8-dihydroguanosine 5'-triphosphate = cyclic pyranopterin phosphate + diphosphate. The protein operates within cofactor biosynthesis; molybdopterin biosynthesis. Its function is as follows. Isoform MOCS1A and isoform MOCS1B probably form a complex that catalyzes the conversion of 5'-GTP to cyclic pyranopterin monophosphate (cPMP). MOCS1A catalyzes the cyclization of GTP to (8S)-3',8-cyclo-7,8-dihydroguanosine 5'-triphosphate and MOCS1B catalyzes the subsequent conversion of (8S)-3',8-cyclo-7,8-dihydroguanosine 5'-triphosphate to cPMP. The protein is Molybdenum cofactor biosynthesis protein 1 (MOCS1) of Bos taurus (Bovine).